Consider the following 142-residue polypeptide: Large ribosomal subunit protein uL11 (142 aa).

This sequence belongs to the universal ribosomal protein uL11 family. As to quaternary structure, part of the ribosomal stalk of the 50S ribosomal subunit. Interacts with L10 and the large rRNA to form the base of the stalk. L10 forms an elongated spine to which L12 dimers bind in a sequential fashion forming a multimeric L10(L12)X complex. Post-translationally, one or more lysine residues are methylated.

In terms of biological role, forms part of the ribosomal stalk which helps the ribosome interact with GTP-bound translation factors. In Sinorhizobium fredii (strain NBRC 101917 / NGR234), this protein is Large ribosomal subunit protein uL11.